The following is an 894-amino-acid chain: Protein SEY1 (894 aa).

Residues 1–64 are disordered; sequence MGLDVDSVPI…PRALEPAQVT (64 aa). Residues 1 to 768 lie on the Cytoplasmic side of the membrane; that stretch reads MGLDVDSVPI…KRGTVSSMSQ (768 aa). The span at 9-24 shows a compositional bias: low complexity; it reads PIAEAAAPSSMAATEP. The span at 40–53 shows a compositional bias: polar residues; sequence APMNTDSSRETMPT. The GB1/RHD3-type G domain occupies 137 to 359; sequence GFGYDICAVL…DESYVFKTEY (223 aa). 147-154 provides a ligand contact to GTP; it reads GSQSTGKS. Residues 536–559 are a coiled coil; sequence KVDDERAQLLDELHTLARTLRANE. The helical transmembrane segment at 769–789 threads the bilayer; the sequence is VPIWMYGVLVVLGWNEAMAVL. The Lumenal segment spans residues 790 to 792; sequence RNP. A helical membrane pass occupies residues 793 to 813; that stretch reads VYFTLLCMVLATAYVIWRLNL. Residues 814–894 are Cytoplasmic-facing; the sequence is GTPVLALASG…DSHPRLPASF (81 aa). A disordered region spans residues 841-894; the sequence is DGTPPSANRAREYRVPSGSTAHVSEKTPHRPLTTSGAAEADTVEDSHPRLPASF.

Belongs to the TRAFAC class dynamin-like GTPase superfamily. GB1/RHD3 GTPase family. RHD3 subfamily.

The protein resides in the endoplasmic reticulum membrane. In terms of biological role, cooperates with the reticulon proteins and tubule-shaping DP1 family proteins to generate and maintain the structure of the tubular endoplasmic reticulum network. Has GTPase activity, which is required for its function in ER organization. This is Protein SEY1 from Malassezia globosa (strain ATCC MYA-4612 / CBS 7966) (Dandruff-associated fungus).